A 250-amino-acid polypeptide reads, in one-letter code: MEGGAALYNPRTVEEVFKDFKGRRTAIVKALTTDVQEFYQQCDPEKENLCLYGLPNEEWEVNLPAEEVPPELPEPALGINFARDGLSEKEWLSLVAIHSDAWLLSVSFYFGSRFSFHKEERKRLFNMINDVPTIFEVVTGMAKAKDKSSAANQNGNKSKSNSKVRTSEGKSSKTKQPKEEDEEIDEDDEDDHGETLCGACGDSDGADEFWICCDLCEKWFHGKCVKITPARAEHIKQYKCPSCSNKRARA.

Position 1 is an N-acetylmethionine (Met-1). Residues 146 to 192 (DKSSAANQNGNKSKSNSKVRTSEGKSSKTKQPKEEDEEIDEDDEDDH) are disordered. A compositionally biased stretch (low complexity) spans 149–163 (SAANQNGNKSKSNSK). Residues 179-192 (EEDEEIDEDDEDDH) show a composition bias toward acidic residues. The segment at 194 to 246 (ETLCGACGDSDGADEFWICCDLCEKWFHGKCVKITPARAEHIKQYKCPSCSNK) adopts a PHD-type zinc-finger fold.

The protein belongs to the Alfin family. As to expression, ubiquitously expressed.

Its subcellular location is the nucleus. Histone-binding component that specifically recognizes H3 tails trimethylated on 'Lys-4' (H3K4me3), which mark transcription start sites of virtually all active genes. This chain is PHD finger protein ALFIN-LIKE 3 (AL3), found in Arabidopsis thaliana (Mouse-ear cress).